Consider the following 561-residue polypeptide: Carboxylesterase 4A (561 aa).

An N-terminal signal peptide occupies residues 1-20; it reads MRWILCWSLTLCLMAQTALG. Cys88 and Cys116 are oxidised to a cystine. Asn214 carries N-linked (GlcNAc...) asparagine glycosylation. Ser221 serves as the catalytic Acyl-ester intermediate. A disulfide bridge connects residues Cys273 and Cys284. N-linked (GlcNAc...) asparagine glycosylation is present at Asn276. Glu353 acts as the Charge relay system in catalysis. The N-linked (GlcNAc...) asparagine glycan is linked to Asn388. Catalysis depends on His467, which acts as the Charge relay system.

Belongs to the type-B carboxylesterase/lipase family.

The protein localises to the secreted. Functionally, probable carboxylesterase. The polypeptide is Carboxylesterase 4A (CES4A) (Homo sapiens (Human)).